Reading from the N-terminus, the 410-residue chain is Sprouty-related, EVH1 domain-containing protein 2 (410 aa).

One can recognise a WH1 domain in the interval threonine 5–leucine 122. The disordered stretch occupies residues threonine 127–serine 171. Polar residues predominate over residues threonine 146–serine 156. A KBD domain is found at serine 197–glycine 252. 2 positions are modified to phosphotyrosine: tyrosine 224 and tyrosine 227. A disordered region spans residues aspartate 274–glutamate 294. The SPR domain occupies arginine 300 to alanine 408.

Homodimer and heterodimer. Able to interact with SPRED1 to form heterodimers. Interacts with RAS. May interact with ZDHHC13 (via ANK repeats) and ZDHHC17 (via ANK repeats). Interacts with TESK1. Interacts with NF1. Post-translationally, phosphorylated on serine and threonine residues. Phosphorylated on tyrosine. Phosphorylation of Tyr-224 and Tyr-227 are required for ubiquitination. In terms of processing, ubiquitinated; leading to degradation by the proteasome. Expressed in the eye, with higher expression in lens epithelium than in lens fiber cells at postnatal day 15.

The protein resides in the cell membrane. It is found in the cytoplasmic vesicle. It localises to the secretory vesicle membrane. The protein localises to the cytoplasm. In terms of biological role, negatively regulates Ras signaling pathways and downstream activation of MAP kinases. Recruits and translocates NF1 to the cell membrane, thereby enabling NF1-dependent hydrolysis of active GTP-bound Ras to inactive GDP-bound Ras. Inhibits fibroblast growth factor (FGF)-induced retinal lens fiber differentiation, probably by inhibiting FGF-mediated phosphorylation of ERK1/2. Inhibits TGFB-induced epithelial-to-mesenchymal transition in lens epithelial cells. This is Sprouty-related, EVH1 domain-containing protein 2 (Spred2) from Rattus norvegicus (Rat).